A 220-amino-acid chain; its full sequence is Deoxyribose-phosphate aldolase 1 (220 aa).

Aspartate 89 (proton donor/acceptor) is an active-site residue. The active-site Schiff-base intermediate with acetaldehyde is lysine 151. Lysine 180 (proton donor/acceptor) is an active-site residue.

It belongs to the DeoC/FbaB aldolase family. DeoC type 1 subfamily.

The protein localises to the cytoplasm. It catalyses the reaction 2-deoxy-D-ribose 5-phosphate = D-glyceraldehyde 3-phosphate + acetaldehyde. The protein operates within carbohydrate degradation; 2-deoxy-D-ribose 1-phosphate degradation; D-glyceraldehyde 3-phosphate and acetaldehyde from 2-deoxy-alpha-D-ribose 1-phosphate: step 2/2. Its function is as follows. Catalyzes a reversible aldol reaction between acetaldehyde and D-glyceraldehyde 3-phosphate to generate 2-deoxy-D-ribose 5-phosphate. This is Deoxyribose-phosphate aldolase 1 from Staphylococcus aureus (strain MSSA476).